A 211-amino-acid chain; its full sequence is MRPEVGREPAALQPRQRPRSDHQLHRSPFTVPPRTPACRSPGPSPPIAVALEVKPQLEDAIGKLAAEAVAVRVFPLAVDDLESDVLVGRPRVEAQDGEILVVGAGLQEVLGRGALVDEVGVEDVELVSLHDLGRWVVKVVVRLVVLVPLEARVHAVEEARLAWPVLVGPQDGGCPGSARTAAGKSFHHLWPQGQWASKPRMNEGTPQCACR.

Positions 1–43 (MRPEVGREPAALQPRQRPRSDHQLHRSPFTVPPRTPACRSPGP) are disordered.

This is an uncharacterized protein from Homo sapiens (Human).